A 203-amino-acid polypeptide reads, in one-letter code: Peptide deformylase (203 aa).

The Fe cation site is built by Cys-130 and His-173. Glu-174 is an active-site residue. His-177 lines the Fe cation pocket.

This sequence belongs to the polypeptide deformylase family. The cofactor is Fe(2+).

It carries out the reaction N-terminal N-formyl-L-methionyl-[peptide] + H2O = N-terminal L-methionyl-[peptide] + formate. Its function is as follows. Removes the formyl group from the N-terminal Met of newly synthesized proteins. Requires at least a dipeptide for an efficient rate of reaction. N-terminal L-methionine is a prerequisite for activity but the enzyme has broad specificity at other positions. This chain is Peptide deformylase, found in Streptococcus pneumoniae serotype 19F (strain G54).